The primary structure comprises 341 residues: tRNA N6-adenosine threonylcarbamoyltransferase (341 aa).

Fe cation-binding residues include His-112 and His-116. Substrate is bound by residues 138-142 (TVSGG), Asp-171, Gly-184, Asp-188, and Asn-279. Asp-307 is a Fe cation binding site.

The protein belongs to the KAE1 / TsaD family. Requires Fe(2+) as cofactor.

Its subcellular location is the cytoplasm. It carries out the reaction L-threonylcarbamoyladenylate + adenosine(37) in tRNA = N(6)-L-threonylcarbamoyladenosine(37) in tRNA + AMP + H(+). Functionally, required for the formation of a threonylcarbamoyl group on adenosine at position 37 (t(6)A37) in tRNAs that read codons beginning with adenine. Is involved in the transfer of the threonylcarbamoyl moiety of threonylcarbamoyl-AMP (TC-AMP) to the N6 group of A37, together with TsaE and TsaB. TsaD likely plays a direct catalytic role in this reaction. The sequence is that of tRNA N6-adenosine threonylcarbamoyltransferase from Riemerella anatipestifer (Moraxella anatipestifer).